Reading from the N-terminus, the 342-residue chain is L-threonine 3-dehydrogenase (342 aa).

Residue C38 coordinates Zn(2+). Residues T40 and H43 each act as charge relay system in the active site. Residues H63, E64, C93, C96, C99, and C107 each coordinate Zn(2+). Residues I175, D195, R200, 262 to 264 (LGI), and 286 to 287 (IY) each bind NAD(+).

Belongs to the zinc-containing alcohol dehydrogenase family. As to quaternary structure, homotetramer. It depends on Zn(2+) as a cofactor.

It localises to the cytoplasm. It carries out the reaction L-threonine + NAD(+) = (2S)-2-amino-3-oxobutanoate + NADH + H(+). It functions in the pathway amino-acid degradation; L-threonine degradation via oxydo-reductase pathway; glycine from L-threonine: step 1/2. Functionally, catalyzes the NAD(+)-dependent oxidation of L-threonine to 2-amino-3-ketobutyrate. This chain is L-threonine 3-dehydrogenase, found in Paraburkholderia phymatum (strain DSM 17167 / CIP 108236 / LMG 21445 / STM815) (Burkholderia phymatum).